Consider the following 142-residue polypeptide: Protein archease (142 aa).

Ca(2+)-binding residues include aspartate 12, aspartate 141, and isoleucine 142.

The protein belongs to the archease family.

Activates the tRNA-splicing ligase complex by facilitating the enzymatic turnover of catalytic subunit RtcB. Acts by promoting the guanylylation of RtcB, a key intermediate step in tRNA ligation. Can also alter the NTP specificity of RtcB such that ATP, dGTP or ITP is used efficiently. In Pyrococcus furiosus (strain ATCC 43587 / DSM 3638 / JCM 8422 / Vc1), this protein is Protein archease.